We begin with the raw amino-acid sequence, 218 residues long: Elongation factor Ts (218 aa).

The tract at residues 82–85 (TDFV) is involved in Mg(2+) ion dislocation from EF-Tu.

The protein belongs to the EF-Ts family.

The protein localises to the cytoplasm. Its function is as follows. Associates with the EF-Tu.GDP complex and induces the exchange of GDP to GTP. It remains bound to the aminoacyl-tRNA.EF-Tu.GTP complex up to the GTP hydrolysis stage on the ribosome. This chain is Elongation factor Ts, found in Prochlorococcus marinus (strain MIT 9301).